The following is a 179-amino-acid chain: Protein Syd (179 aa).

It belongs to the Syd family.

Its subcellular location is the cell inner membrane. In terms of biological role, interacts with the SecY protein in vivo. May bind preferentially to an uncomplexed state of SecY, thus functioning either as a chelating agent for excess SecY in the cell or as a regulatory factor that negatively controls the translocase function. The chain is Protein Syd from Pseudoalteromonas translucida (strain TAC 125).